Reading from the N-terminus, the 142-residue chain is Baculoviral IAP repeat-containing protein 5 (142 aa).

The BIR repeat unit spans residues 18–88 (RVSTFKNWPF…KHSSGCAFLS (71 aa)). Phosphoserine; by AURKC is present on S20. At K23 the chain carries N6-acetyllysine. T34 bears the Phosphothreonine; by CDK1 and CDK15 mark. A Phosphothreonine modification is found at T48. Positions 57, 60, 77, and 84 each coordinate Zn(2+). Residues K90, K110, K112, and K115 each carry the N6-acetyllysine modification. A Phosphothreonine; by AURKB modification is found at T117. Position 129 is an N6-acetyllysine (K129).

It belongs to the IAP family. As to quaternary structure, monomer or homodimer. Exists as a homodimer in the apo state and as a monomer in the CPC-bound state. The monomer protects cells against apoptosis more efficiently than the dimer. Only the dimeric form is capable of enhancing tubulin stability in cells. When phosphorylated, interacts with LAMTOR5/HBXIP; the resulting complex binds pro-CASP9, as well as active CASP9, but much less efficiently. Component of the chromosomal passenger complex (CPC) composed of at least BIRC5/survivin, CDCA8/borealin, INCENP, AURKB or AURKC; in the complex forms a triple-helix bundle-based subcomplex with INCENP and CDCA8. Interacts with JTB. Interacts (via BIR domain) with histone H3 phosphorylated at 'Thr-3' (H3pT3). Interacts with EVI5. Interacts with GTP-bound RAN in both the S and M phases of the cell cycle. Interacts with USP9X. Interacts with tubulin. Interacts with BIRC2/c-IAP1. The acetylated form at Lys-129 interacts with STAT3. The monomeric form deacetylated at Lys-129 interacts with XPO1/CRM1. The monomeric form interacts with XIAP/BIRC4. Both the dimeric and monomeric form can interact with DIABLO/SMAC. Interacts with BIRC6/bruce. Interacts with FBXL7; this interaction facilitates the polyubiquitination and subsequent proteasomal degradation of BIRC5 by the SCF(FBXL7) E3 ubiquitin-protein ligase complex. Post-translationally, ubiquitinated by the Cul9-RING ubiquitin-protein ligase complex, leading to its degradation. Ubiquitination is required for centrosomal targeting. Deubiquitinated by USP35 or USP38; leading to stabilization. Acetylation at Lys-129 results in its homodimerization, while deacetylation promotes the formation of monomers which heterodimerize with XPO1/CRM1 which facilitates its nuclear export. The acetylated form represses STAT3 transactivation. The dynamic equilibrium between its acetylation and deacetylation at Lys-129 determines its interaction with XPO1/CRM1, its subsequent subcellular localization, and its ability to inhibit STAT3 transactivation. In terms of processing, in vitro phosphorylation at Thr-117 by AURKB prevents interaction with INCENP and localization to mitotic chromosomes. Phosphorylation at Thr-48 by CK2 is critical for its mitotic and anti-apoptotic activities. Phosphorylation at Thr-34 by CDK15 is critical for its anti-apoptotic activity. Phosphorylation at Ser-20 by AURKC is critical for regulation of proper chromosome alignment and segregation, and possibly cytokinesis.

Its subcellular location is the cytoplasm. The protein localises to the nucleus. It localises to the chromosome. The protein resides in the centromere. It is found in the cytoskeleton. Its subcellular location is the spindle. The protein localises to the kinetochore. It localises to the midbody. Multitasking protein that has dual roles in promoting cell proliferation and preventing apoptosis. Component of a chromosome passage protein complex (CPC) which is essential for chromosome alignment and segregation during mitosis and cytokinesis. Acts as an important regulator of the localization of this complex; directs CPC movement to different locations from the inner centromere during prometaphase to midbody during cytokinesis and participates in the organization of the center spindle by associating with polymerized microtubules. Involved in the recruitment of CPC to centromeres during early mitosis via association with histone H3 phosphorylated at 'Thr-3' (H3pT3) during mitosis. The complex with RAN plays a role in mitotic spindle formation by serving as a physical scaffold to help deliver the RAN effector molecule TPX2 to microtubules. May counteract a default induction of apoptosis in G2/M phase. The acetylated form represses STAT3 transactivation of target gene promoters. May play a role in neoplasia. Inhibitor of CASP3 and CASP7. Essential for the maintenance of mitochondrial integrity and function. This chain is Baculoviral IAP repeat-containing protein 5 (BIRC5), found in Bos taurus (Bovine).